The following is a 282-amino-acid chain: Epoxide hydrolase LasB (282 aa).

The interval 1-133 (MPAETVRKEV…TDSSWTARPA (133 aa)) is lsd19A. Residue Tyr-14 participates in substrate binding. Catalysis depends on Asp-38, which acts as the Proton acceptor; for 5-exo epoxide-opening cyclization activity. Residues Glu-65 and His-146 each contribute to the substrate site. The segment at 134–282 (PDEERRKELA…TDVSLLDPAA (149 aa)) is lsd19B. The active-site Proton acceptor; for 6-endo epoxide-opening cyclization activity is Asp-170. 3 residues coordinate substrate: Arg-177, Glu-197, and Tyr-251.

Its function is as follows. Epoxide hydrolase responsible for the double epoxide-opening cyclization of bisepoxyprelasalocid A to form lasalocid A, a polyether antibiotic. In vitro, accepts various substrate analogs differing in the left segment of lasalocid and epoxide stereochemistry to afford products with excellent regioselectivity. The polypeptide is Epoxide hydrolase LasB (lsd19) (Streptomyces lasalocidi (Streptomyces lasaliensis)).